Reading from the N-terminus, the 343-residue chain is Methionine import ATP-binding protein MetN 1 (343 aa).

The ABC transporter domain occupies Ile2–Ile241. Gly38 to Ser45 contributes to the ATP binding site.

It belongs to the ABC transporter superfamily. Methionine importer (TC 3.A.1.24) family. The complex is composed of two ATP-binding proteins (MetN), two transmembrane proteins (MetI) and a solute-binding protein (MetQ).

The protein localises to the cell inner membrane. The catalysed reaction is L-methionine(out) + ATP + H2O = L-methionine(in) + ADP + phosphate + H(+). It carries out the reaction D-methionine(out) + ATP + H2O = D-methionine(in) + ADP + phosphate + H(+). Its function is as follows. Part of the ABC transporter complex MetNIQ involved in methionine import. Responsible for energy coupling to the transport system. This is Methionine import ATP-binding protein MetN 1 from Salmonella typhimurium (strain LT2 / SGSC1412 / ATCC 700720).